We begin with the raw amino-acid sequence, 46 residues long: Large ribosomal subunit protein bL34 (46 aa).

It belongs to the bacterial ribosomal protein bL34 family.

The sequence is that of Large ribosomal subunit protein bL34 from Synechococcus sp. (strain JA-2-3B'a(2-13)) (Cyanobacteria bacterium Yellowstone B-Prime).